Here is a 299-residue protein sequence, read N- to C-terminus: MLDNTRLRIAIQKSGRLSDDSRELLARCGIKINLHTQRLIAMAENMPIDILRVRDDDIPGLVMDGVVDLGIIGENVLEEELLNRRAQGEDPRYFTLRRLDFGGCRLSLATPVDEAWDGPAALDGKRIATSYPHLLKRYLDQKGVSFKSCLLNGSVEVAPRAGLADAICDLVSTGATLEANGLREVEVIYRSKACLIQRDGEMAQSKQQLIDKLLTRIQGVIQARESKYIMMHAPSERLEEVIALLPGAERPTILPLAGEQQRVAMHMVSSETLFWETMEKLKALGASSILVLPIEKMME.

It belongs to the ATP phosphoribosyltransferase family. Long subfamily. As to quaternary structure, equilibrium between an active dimeric form, an inactive hexameric form and higher aggregates. Interconversion between the various forms is largely reversible and is influenced by the natural substrates and inhibitors of the enzyme. The cofactor is Mg(2+).

The protein resides in the cytoplasm. It catalyses the reaction 1-(5-phospho-beta-D-ribosyl)-ATP + diphosphate = 5-phospho-alpha-D-ribose 1-diphosphate + ATP. The protein operates within amino-acid biosynthesis; L-histidine biosynthesis; L-histidine from 5-phospho-alpha-D-ribose 1-diphosphate: step 1/9. Feedback inhibited by histidine. Catalyzes the condensation of ATP and 5-phosphoribose 1-diphosphate to form N'-(5'-phosphoribosyl)-ATP (PR-ATP). Has a crucial role in the pathway because the rate of histidine biosynthesis seems to be controlled primarily by regulation of HisG enzymatic activity. The polypeptide is ATP phosphoribosyltransferase (Salmonella enteritidis PT4 (strain P125109)).